Consider the following 244-residue polypeptide: Uridylate kinase (244 aa).

15-18 (KLSG) serves as a coordination point for ATP. Residues 23 to 28 (GSEGFG) are involved in allosteric activation by GTP. G57 is a UMP binding site. Residues G58 and R62 each coordinate ATP. Residues D77 and 138-145 (TGNPFFTT) each bind UMP. 3 residues coordinate ATP: T165, F171, and D174.

It belongs to the UMP kinase family. As to quaternary structure, homohexamer.

The protein localises to the cytoplasm. It catalyses the reaction UMP + ATP = UDP + ADP. It participates in pyrimidine metabolism; CTP biosynthesis via de novo pathway; UDP from UMP (UMPK route): step 1/1. Its activity is regulated as follows. Allosterically activated by GTP. Inhibited by UTP. In terms of biological role, catalyzes the reversible phosphorylation of UMP to UDP. This is Uridylate kinase from Aeromonas hydrophila subsp. hydrophila (strain ATCC 7966 / DSM 30187 / BCRC 13018 / CCUG 14551 / JCM 1027 / KCTC 2358 / NCIMB 9240 / NCTC 8049).